Here is a 171-residue protein sequence, read N- to C-terminus: Ribosome maturation factor RimM (171 aa).

Residues 96-169 enclose the PRC barrel domain; the sequence is EGEFFIADMI…KMIIDPIKGM (74 aa).

Belongs to the RimM family. As to quaternary structure, binds ribosomal protein uS19.

It localises to the cytoplasm. In terms of biological role, an accessory protein needed during the final step in the assembly of 30S ribosomal subunit, possibly for assembly of the head region. Essential for efficient processing of 16S rRNA. May be needed both before and after RbfA during the maturation of 16S rRNA. It has affinity for free ribosomal 30S subunits but not for 70S ribosomes. The protein is Ribosome maturation factor RimM of Clostridioides difficile (strain 630) (Peptoclostridium difficile).